The primary structure comprises 855 residues: Inactive rhomboid protein 1 (855 aa).

Residues 1–411 lie on the Cytoplasmic side of the membrane; sequence MSEARRDSTS…HRPFFTYWLT (411 aa). Residues S76 and S176 each carry the phosphoserine modification. Phosphothreonine occurs at positions 180 and 183. S390 is subject to Phosphoserine. The helical transmembrane segment at 412 to 432 threads the bilayer; that stretch reads FVHSLVTILAVCIYGIAPVGF. At 433–655 the chain is on the lumenal side; it reads SQHETVDSVL…NPEVPDQFYR (223 aa). An N-linked (GlcNAc...) asparagine glycan is attached at N583. The chain crosses the membrane as a helical span at residues 656–676; it reads LWLSLFLHAGILHCLVSICFQ. Residues 677–691 are Cytoplasmic-facing; the sequence is MTVLRDLEKLAGWHR. A helical membrane pass occupies residues 692–712; sequence IAIIYLLSGVTGNLASAIFLP. Residues 713–714 lie on the Lumenal side of the membrane; sequence YR. Residues 715-735 traverse the membrane as a helical segment; sequence AEVGPAGSQFGILACLFVELF. The Cytoplasmic portion of the chain corresponds to 736–746; the sequence is QSWQILARPWR. The helical transmembrane segment at 747–767 threads the bilayer; sequence AFFKLLAVVLFLFTFGLLPWI. At 768–772 the chain is on the lumenal side; sequence DNFAH. The chain crosses the membrane as a helical span at residues 773 to 793; sequence ISGFISGLFLSFAFLPYISFG. At 794–803 the chain is on the cytoplasmic side; that stretch reads KFDLYRKRCQ. Residues 804–824 traverse the membrane as a helical segment; the sequence is IIIFQVVFLGLLAGLVVLFYV. Topologically, residues 825-855 are lumenal; sequence YPVRCEWCEFLTCIPFTDKFCEKYELDAQLH.

This sequence belongs to the peptidase S54 family. In terms of assembly, homodimer, or homooligomer. Interacts with TGFA and HBEGF. Interacts with EGF; may retain EGF in the endoplasmic reticulum and regulates its degradation through the endoplasmic reticulum-associated degradation (ERAD). Interacts (via cytoplasmic N-terminus) with FRMD8/iTAP; this interaction leads to mutual protein stabilization. Interacts with ADAM17/TACE. In terms of processing, N-glycosylated. Highly expressed in cerebellum, cerebrum, heart, skeletal muscle, placenta, pancreatic islet and testis. Detected at lower levels in colon, kidney, small intestine and lung.

It is found in the endoplasmic reticulum membrane. Its subcellular location is the golgi apparatus membrane. Regulates ADAM17 protease, a sheddase of the epidermal growth factor (EGF) receptor ligands and TNF, thereby plays a role in sleep, cell survival, proliferation, migration and inflammation. Does not exhibit any protease activity on its own. The polypeptide is Inactive rhomboid protein 1 (RHBDF1) (Homo sapiens (Human)).